The chain runs to 649 residues: Outer dense fiber protein 2 (649 aa).

The interval 1–65 (MKNRSPSPPL…TKVPWIPPGK (65 aa)) is disordered. 3 coiled-coil regions span residues 137-219 (QKRE…AETD), 247-426 (DINL…LEML), and 464-649 (EVAV…NCAL). Residues 339–358 (SEVSKSIESTKAHLQGQLRT) form a disordered region.

This sequence belongs to the ODF2 family. In terms of assembly, self-associates. Associates with microtubules and forms a fibrillar structure partially linked to the microtubule network.

The protein resides in the cytoplasm. It localises to the cytoskeleton. It is found in the microtubule organizing center. Its subcellular location is the centrosome. The protein localises to the cell projection. The protein resides in the cilium. It localises to the centriole. It is found in the spindle pole. Its subcellular location is the flagellum. In terms of biological role, seems to be a major form of sperm tail outer dense fibers. The sequence is that of Outer dense fiber protein 2 (odf2) from Xenopus laevis (African clawed frog).